We begin with the raw amino-acid sequence, 160 residues long: Cytochrome b6-f complex subunit 4 (160 aa).

The next 3 membrane-spanning stretches (helical) occupy residues 36–56 (LLYI…GLAV), 95–115 (LLGI…PFIE), and 131–151 (SLFL…CLPI).

It belongs to the cytochrome b family. PetD subfamily. As to quaternary structure, the 4 large subunits of the cytochrome b6-f complex are cytochrome b6, subunit IV (17 kDa polypeptide, PetD), cytochrome f and the Rieske protein, while the 4 small subunits are PetG, PetL, PetM and PetN. The complex functions as a dimer.

The protein localises to the cellular thylakoid membrane. Component of the cytochrome b6-f complex, which mediates electron transfer between photosystem II (PSII) and photosystem I (PSI), cyclic electron flow around PSI, and state transitions. The protein is Cytochrome b6-f complex subunit 4 of Prochlorococcus marinus (strain NATL2A).